A 295-amino-acid polypeptide reads, in one-letter code: MRRLTDSFILGLAKGAVIPGLYPFRMTEGRSSLEQIGVVITVAISFLLTFKKFDPRFYKPIGDFKIVFLSLMAAKLPSFLSAVVMICLIFSEMRLRMILSRCVLIMPSYSPAVFTGMMVSLFFKSQMFDDYSVLTTTAFLLPFTLRYGWMIRSSGFLISLQKYRPILKSTSFREVDLKYLVKFTVEFLLLFTILWIGKIFLSMPKSNHLFFLTVVNNVFFKLNVFKAAACAMVAILSGLMMNVCLYRIIFEAFLGLGFSSIMLTLSSDLKDRSFYAGDLLNGFFCLVVCCMYFGV.

The next 8 membrane-spanning stretches (helical) occupy residues Leu33 to Phe53, Ile66 to Ile86, Val103 to Phe123, Tyr131 to Ile151, Phe183 to Met203, Val218 to Gly238, Val243 to Leu263, and Phe274 to Gly294.

Its subcellular location is the host membrane. This chain is Protein U26 (U26), found in Homo sapiens (Human).